We begin with the raw amino-acid sequence, 157 residues long: 2-C-methyl-D-erythritol 2,4-cyclodiphosphate synthase (157 aa).

Residues Asp-8 and His-10 each contribute to the a divalent metal cation site. 4-CDP-2-C-methyl-D-erythritol 2-phosphate-binding positions include 8–10 and 34–35; these read DIH and HS. An a divalent metal cation-binding site is contributed by His-42. Residues 56-58 and 132-135 each bind 4-CDP-2-C-methyl-D-erythritol 2-phosphate; these read DIG and TTNE.

This sequence belongs to the IspF family. In terms of assembly, homotrimer. A divalent metal cation serves as cofactor.

The catalysed reaction is 4-CDP-2-C-methyl-D-erythritol 2-phosphate = 2-C-methyl-D-erythritol 2,4-cyclic diphosphate + CMP. It participates in isoprenoid biosynthesis; isopentenyl diphosphate biosynthesis via DXP pathway; isopentenyl diphosphate from 1-deoxy-D-xylulose 5-phosphate: step 4/6. Its function is as follows. Involved in the biosynthesis of isopentenyl diphosphate (IPP) and dimethylallyl diphosphate (DMAPP), two major building blocks of isoprenoid compounds. Catalyzes the conversion of 4-diphosphocytidyl-2-C-methyl-D-erythritol 2-phosphate (CDP-ME2P) to 2-C-methyl-D-erythritol 2,4-cyclodiphosphate (ME-CPP) with a corresponding release of cytidine 5-monophosphate (CMP). The sequence is that of 2-C-methyl-D-erythritol 2,4-cyclodiphosphate synthase from Synechococcus sp. (strain JA-3-3Ab) (Cyanobacteria bacterium Yellowstone A-Prime).